The sequence spans 84 residues: uncharacterized protein (84 aa).

A helical membrane pass occupies residues threonine 13 to leucine 35. Residues leucine 41–lysine 84 are a coiled coil.

The protein localises to the host membrane. This is an uncharacterized protein from Sulfolobus islandicus rod-shaped virus 1 (SIRV-1).